Consider the following 795-residue polypeptide: Outer membrane protein assembly factor BamA (795 aa).

Positions 1-19 (MKKLLIASLLFGTTTTVFA) are cleaved as a signal peptide. POTRA domains lie at 22-89 (FVAK…VVAK), 90-170 (SIIS…INED), 173-259 (AKLA…VNEG), 262-341 (YDLR…VDAG), and 344-418 (LTVR…VKER).

The protein belongs to the BamA family. Part of the Bam complex.

It is found in the cell outer membrane. Its function is as follows. Part of the outer membrane protein assembly complex, which is involved in assembly and insertion of beta-barrel proteins into the outer membrane. This is Outer membrane protein assembly factor BamA from Haemophilus influenzae (strain ATCC 51907 / DSM 11121 / KW20 / Rd).